Reading from the N-terminus, the 359-residue chain is DNA-directed RNA polymerase RPB3-11 homolog (359 aa).

In the N-terminal section; belongs to the archaeal RpoD/eukaryotic RPB3 RNA polymerase subunit family. This sequence in the C-terminal section; belongs to the archaeal RpoL/eukaryotic RPB11/RPC19 RNA polymerase subunit family. As to quaternary structure, part of the viral DNA-directed RNA polymerase that consists of 8 polII-like subunits (RPB1, RPB2, RPB3, RPB5, RPB6, RPB7, RPB9, RPB10), a capping enzyme and a termination factor.

Its subcellular location is the host cytoplasm. It is found in the virion. In terms of biological role, component of the DNA-directed RNA polymerase (RNAP) that catalyzes the transcription in the cytoplasm of viral DNA into RNA using the four ribonucleoside triphosphates as substrates. This chain is DNA-directed RNA polymerase RPB3-11 homolog, found in Ornithodoros (relapsing fever ticks).